Here is a 1196-residue protein sequence, read N- to C-terminus: Phosphoglucan, water dikinase, chloroplastic (1196 aa).

A chloroplast-targeting transit peptide spans 1–54 (MESIGSHCCSSPFTFITRNSSSSLPRLVNITHRVNLSHQSHRLRNSNSRLTCTA). Thr55 carries the N-acetylthreonine modification. In terms of domain architecture, CBM20 spans 66–166 (KKDGSGTKVR…NFSVVCHWDA (101 aa)). A disordered region spans residues 174 to 200 (PQEVGNDDDVGDGGHERDNHDVGDDRV). Residues 185–200 (DGGHERDNHDVGDDRV) show a composition bias toward basic and acidic residues. The Tele-phosphohistidine intermediate role is filled by His759. The segment at 804 to 855 (LSTEGRSRTSKSSATKKTDKNSLSKKKTDKKSLSIDDEESKPGSSSSNSLLY) is disordered.

Belongs to the PEP-utilizing enzyme family. Homodimer. Mg(2+) is required as a cofactor. In terms of tissue distribution, in all starch containing tissues (e.g. roots, leaves, stems, inflorescence and siliques).

It is found in the plastid. The protein localises to the chloroplast. It catalyses the reaction [(1-&gt;4)-6-phospho-alpha-D-glucosyl](n) + n ATP + n H2O = [(1-&gt;4)-3,6-bisphospho-alpha-D-glucosyl](n) + n AMP + n phosphate + 2n H(+). Mediates the incorporation of phosphate into starch-like phospho-alpha-glucan, mostly at the C-3 position of glucose units. Required for starch degradation, suggesting that the phosphate content of starch regulates its degradability. In Arabidopsis thaliana (Mouse-ear cress), this protein is Phosphoglucan, water dikinase, chloroplastic (GWD3).